Consider the following 971-residue polypeptide: uncharacterized protein (971 aa).

An N-terminal signal peptide occupies residues 1 to 24; sequence MQSNLLKVLGVLAIVATLVCFIFA. The segment at 127 to 146 is disordered; that stretch reads RTRPGKSNLDDSNQMIPIPR. The next 6 helical transmembrane spans lie at 611-631, 721-741, 753-773, 795-815, 832-852, and 865-885; these read IKAILILYVMTYGAMFLLGFA, LGLSGIIYFIITFIAVCIVII, AFMATCILIGIAPLFISFLLF, VVMMAGIIVLTQLFTIYLDFV, FIGTILPIALLNVPIFCINWF, and GVNMQNIVALVIIAYGMYGYV. The segment covering 933 to 944 has biased composition (basic residues); sequence TSRAKSRLKQRN. Residues 933–971 are disordered; it reads TSRAKSRLKQRNRTLEHAEQNSKKYMKKIGENTNEGTLK. Positions 945 to 954 are enriched in basic and acidic residues; it reads RTLEHAEQNS.

Belongs to the TrbL/VirB6 family.

It localises to the cell membrane. This is an uncharacterized protein from Rickettsia typhi (strain ATCC VR-144 / Wilmington).